The chain runs to 330 residues: Apolipoprotein E (330 aa).

The N-terminal stretch at 1 to 18 is a signal peptide; it reads MKVLWAALVVALLAGCWA. Residues 21-43 form a disordered region; sequence EPESPLQGKPEPELEPELEPKRE. 7 consecutive repeat copies span residues 96–117, 118–139, 140–161, 162–183, 184–205, 206–227, and 247–268. Residues 96–268 are 7 X 22 AA approximate tandem repeats; that stretch reads TLMEETMKEI…HLDEVREQME (173 aa). At Met-159 the chain carries Methionine sulfoxide. Ser-163 is modified (phosphoserine). Positions 174–184 are LDL and other lipoprotein receptors binding; sequence HMRKLRKRVLR. 178-181 provides a ligand contact to heparin; it reads LRKR. A lipid-binding and lipoprotein association region spans residues 226-303; it reads HANLATQPLR…SWFEPLVEDM (78 aa). 242 to 249 contributes to the heparin binding site; sequence GQQLRGRL. The interval 279-330 is homooligomerization; that stretch reads NQMRQQVEAFQARLKSWFEPLVEDMQRQWAGLVEKVQVAVGTSPTTPPLETK. A specificity for association with VLDL region spans residues 291–303; sequence RLKSWFEPLVEDM.

It belongs to the apolipoprotein A1/A4/E family. As to quaternary structure, homotetramer. May interact with ABCA1; functionally associated with ABCA1 in the biogenesis of HDLs. May interact with APP/A4 amyloid-beta peptide; the interaction is extremely stable in vitro but its physiological significance is unclear. May interact with MAPT. May interact with MAP2. In the cerebrospinal fluid, interacts with secreted SORL1. Interacts with PMEL; this allows the loading of PMEL luminal fragment on ILVs to induce fibril nucleation. Post-translationally, APOE exists as multiple glycosylated and sialylated glycoforms within cells and in plasma. The extent of glycosylation and sialylation are tissue and context specific. Glycated in plasma VLDL. In terms of processing, phosphorylated by FAM20C in the extracellular medium.

Its subcellular location is the secreted. It localises to the extracellular space. It is found in the extracellular matrix. The protein localises to the extracellular vesicle. The protein resides in the endosome. Its subcellular location is the multivesicular body. Functionally, APOE is an apolipoprotein, a protein associating with lipid particles, that mainly functions in lipoprotein-mediated lipid transport between organs via the plasma and interstitial fluids. APOE is a core component of plasma lipoproteins and is involved in their production, conversion and clearance. Apolipoproteins are amphipathic molecules that interact both with lipids of the lipoprotein particle core and the aqueous environment of the plasma. As such, APOE associates with chylomicrons, chylomicron remnants, very low density lipoproteins (VLDL) and intermediate density lipoproteins (IDL) but shows a preferential binding to high-density lipoproteins (HDL). It also binds a wide range of cellular receptors including the LDL receptor/LDLR, the LDL receptor-related proteins LRP1, LRP2 and LRP8 and the very low-density lipoprotein receptor/VLDLR that mediate the cellular uptake of the APOE-containing lipoprotein particles. Finally, APOE also has a heparin-binding activity and binds heparan-sulfate proteoglycans on the surface of cells, a property that supports the capture and the receptor-mediated uptake of APOE-containing lipoproteins by cells. A main function of APOE is to mediate lipoprotein clearance through the uptake of chylomicrons, VLDLs, and HDLs by hepatocytes. APOE is also involved in the biosynthesis by the liver of VLDLs as well as their uptake by peripheral tissues ensuring the delivery of triglycerides and energy storage in muscle, heart and adipose tissues. By participating in the lipoprotein-mediated distribution of lipids among tissues, APOE plays a critical role in plasma and tissues lipid homeostasis. APOE is also involved in two steps of reverse cholesterol transport, the HDLs-mediated transport of cholesterol from peripheral tissues to the liver, and thereby plays an important role in cholesterol homeostasis. First, it is functionally associated with ABCA1 in the biogenesis of HDLs in tissues. Second, it is enriched in circulating HDLs and mediates their uptake by hepatocytes. APOE also plays an important role in lipid transport in the central nervous system, regulating neuron survival and sprouting. This Neomonachus schauinslandi (Hawaiian monk seal) protein is Apolipoprotein E (APOE).